We begin with the raw amino-acid sequence, 218 residues long: Response regulator UvrY (218 aa).

Positions 3–119 (NVLLVDDHEL…EVVSAIRSVY (117 aa)) constitute a Response regulatory domain. At Asp-54 the chain carries 4-aspartylphosphate. Residues 143–208 (TESPFASLSE…ELTHLAIRHG (66 aa)) form the HTH luxR-type domain. Positions 167–186 (VNEISEQLNLSPKTVNSYRY) form a DNA-binding region, H-T-H motif.

Phosphorylated and activated by BarA.

It localises to the cytoplasm. Functionally, member of the two-component regulatory system UvrY/BarA involved in the regulation of carbon metabolism via the CsrA/CsrB regulatory system. UvrY activates the transcription of the untranslated csrB RNA and of barA, in an autoregulatory loop. Mediates the effects of CsrA on csrB RNA by BarA-dependent and BarA-independent mechanisms. The polypeptide is Response regulator UvrY (uvrY) (Escherichia coli (strain K12)).